The sequence spans 166 residues: Nucleotide-binding protein CV_2047 (166 aa).

The protein belongs to the YajQ family.

In terms of biological role, nucleotide-binding protein. The protein is Nucleotide-binding protein CV_2047 of Chromobacterium violaceum (strain ATCC 12472 / DSM 30191 / JCM 1249 / CCUG 213 / NBRC 12614 / NCIMB 9131 / NCTC 9757 / MK).